Here is a 352-residue protein sequence, read N- to C-terminus: MVVSVAILGGSGYTGGELLRLLLSHPEVEVKQVTSRSRAGKFVHTVHPNLRKRTALKFVPPEALEPVDLLFACLPHGETAPIVDRLLELAPIVIDLSADFRLRDPAAYEQWYHWTHPRPDLLAQAVYGLPELHREEIRNARYIACPGCNSTTVILGLAPLFRAGLIDLDLPVTVECKVGSSGAGGEAGPASHHPERSGVIRPFKPGGHRHTAEVLQELTVCGRTPSLGLSVTSVEAVRGILATAHLFPKQPLTDRDLWQVYRAAYGQEPFIRLVKEASGIHRYPEPKILAGSNYCDIGWELDELPGGRQRLVVMSAIDNLMKGAAGQAVQAMNIRLGFPETLGLEFPGLHPL.

Position 11-14 (11-14) interacts with NADP(+); it reads SGYT. Cys-148 is a catalytic residue. Residue Asn-319 participates in NADP(+) binding.

The protein belongs to the NAGSA dehydrogenase family. Type 1 subfamily. LysY sub-subfamily.

It is found in the cytoplasm. It catalyses the reaction [amino-group carrier protein]-C-terminal-N-(1-carboxy-5-oxopentan-1-yl)-L-glutamine + phosphate + NADP(+) = [amino-group carrier protein]-C-terminal-N-(1-carboxy-5-phosphooxy-5-oxopentan-1-yl)-L-glutamine + NADPH + H(+). It functions in the pathway amino-acid biosynthesis; L-lysine biosynthesis via AAA pathway; L-lysine from L-alpha-aminoadipate (Thermus route): step 3/5. Functionally, catalyzes the NADPH-dependent reduction of [LysW]-aminoadipate 6-phosphate to yield [LysW]-aminoadipate 6-semialdehyde. This is Putative [LysW]-L-2-aminoadipate 6-phosphate reductase from Thermomicrobium roseum (strain ATCC 27502 / DSM 5159 / P-2).